Here is a 259-residue protein sequence, read N- to C-terminus: MTNTALPTSSADQENDTQLNELHKSQNAVVLLSGGLDSVTCLYWAKARYASVTAVSFDYGQRHNSELIAAKAIAETAGVNHRIIDIDIAQLGGSSLTDHSMIVPDGDTDKFPDKKRDEIDNDAIPNTYVPARNTIFLSYALAVAEVTDSNHIVIGVSSVDYSGYPDCRPEYIAAFQHMANLATKAGVTGHHLSIQTPLQQLSKAKTIELGLSLGVDYGQTISCYQADANGFACGVCDSCALRRQGFAQAGVADPTHYQS.

Position 32 to 42 (32 to 42 (LSGGLDSVTCL)) interacts with ATP. Zn(2+) is bound by residues C223, C233, C236, and C239.

This sequence belongs to the QueC family. Requires Zn(2+) as cofactor.

It catalyses the reaction 7-carboxy-7-deazaguanine + NH4(+) + ATP = 7-cyano-7-deazaguanine + ADP + phosphate + H2O + H(+). It participates in purine metabolism; 7-cyano-7-deazaguanine biosynthesis. In terms of biological role, catalyzes the ATP-dependent conversion of 7-carboxy-7-deazaguanine (CDG) to 7-cyano-7-deazaguanine (preQ(0)). The protein is 7-cyano-7-deazaguanine synthase of Psychrobacter arcticus (strain DSM 17307 / VKM B-2377 / 273-4).